Consider the following 151-residue polypeptide: MEYSNLRRQIIFMKKNLFDQGYLDEQFNQLEELQDESSPNFVEEVAALFFKDSSRLLTNIEQAIDKYPQDFYRLDSLVQQLKGSGSSIGALRMKNECSVFKVNCNDRNLEGCRRSLQKMKREHATLKQKLESYFQLLRQVGPRDYAVSSRK.

Positions 38-133 (SPNFVEEVAA…ATLKQKLESY (96 aa)) constitute an HPt domain.

In terms of biological role, functions as a two-component phosphorelay mediator between cytokinin sensor histidine kinases and response regulators (B-type ARRs). Plays an important role in propagating cytokinin signal transduction. The chain is Pseudo histidine-containing phosphotransfer protein 2 from Oryza sativa subsp. japonica (Rice).